An 805-amino-acid chain; its full sequence is H(+)/Cl(-) exchange transporter 7 (805 aa).

The tract at residues 1 to 49 (MANVSKKVSWSGRDRDDEEAAPLLRRTARPGGGTPLLNGAGPGAARQSP) is disordered. The Cytoplasmic portion of the chain corresponds to 1–126 (MANVSKKVSW…TAFRTVEIKR (126 aa)). 2 positions are modified to phosphoserine: Ser-9 and Ser-60. Helical transmembrane passes span 127 to 159 (WVICALIGILTGLVACFIDIVVENLAGLKYRVI) and 174 to 197 (FSLLLWATLNAAFVLVGSVIVAFI). The short motif at 203-207 (GSGIP) is the Selectivity filter part_1 element. Ser-204 serves as a coordination point for chloride. The helical intramembrane region spans 206–213 (IPQIKCFL). 2 helical membrane passes run 223-241 (RLKTLVIKVSGVILSVVGG) and 247-264 (EGPMIHSGSVIAAGISQG). Positions 245-249 (GKEGP) match the Selectivity filter part_2 motif. 2 intramembrane regions (helical) span residues 288–300 (FVSAGAAAGVSAA) and 304–312 (PVGGVLFSL). Transmembrane regions (helical) follow at residues 322 to 341 (FLTWRIFFASMISTFTLNFV), 375 to 405 (IPVFIAMGVVGGVLGAVFNALNYWLTMFRIR), 410 to 432 (PCLQVIEAVLVAAVTATVAFVLI), 487 to 507 (PLTLGLFTLVYFFLACWTYGL), and 512 to 535 (GVFIPSLLIGAAWGRLFGISLSYL). The Selectivity filter part_3 signature appears at 512–516 (GVFIP). Phe-514 is a binding site for chloride. The segment at residues 545-559 (GKYALMGAAAQLGGI) is an intramembrane region (helical). The segment at residues 560–562 (VRM) is an intramembrane region (note=Loop between two helices). The segment at residues 563–574 (TLSLTVIMMEAT) is an intramembrane region (helical). An intramembrane region (note=Loop between two helices) is located at residues 575–578 (SNVT). Residues 579–597 (YGFPIMLVLMTAKIVGDVF) traverse the membrane as a helical segment. Over 598–805 (IEGLYDMHIQ…GLEELSLAQT (208 aa)) the chain is Cytoplasmic. Residue Tyr-602 coordinates chloride. CBS domains are found at residues 631-695 (MSTP…VFVE) and 741-799 (MNPS…GLEE). ATP contacts are provided by residues 658-660 (HNG) and 783-786 (TRKD). Residue Ser-801 is modified to Phosphoserine.

It belongs to the chloride channel (TC 2.A.49) family. ClC-7/CLCN7 subfamily. Chloride channel 7 are heteromers of alpha (CLCN7) and beta (OSTM1) subunits. Brain and kidney.

The protein resides in the lysosome membrane. The enzyme catalyses 2 chloride(in) + H(+)(out) = 2 chloride(out) + H(+)(in). Slowly voltage-gated channel mediating the exchange of chloride ions against protons. Functions as antiporter and contributes to the acidification of the lysosome lumen and may be involved in maintaining lysosomal pH. The CLC channel family contains both chloride channels and proton-coupled anion transporters that exchange chloride or another anion for protons. The presence of conserved gating glutamate residues is typical for family members that function as antiporters. The chain is H(+)/Cl(-) exchange transporter 7 from Homo sapiens (Human).